Reading from the N-terminus, the 460-residue chain is MEAARCAPGPRGDSAFDDETLRLRQLKLDNQRALLEKKQRKKRLEPLMVQPNPEARLRRLKPRGSEEHTPLVDPQMPRSDVILHGIDGPAAFLKPEAQDLESKPQVLSVGSPAPEEGTEGSADGESPEETAPKPDLQEILQKHGILSSVNYDEEPDKEEDEGGNLSSPSARSEESAAASQKAASETGASGVTAQQGDAQLGEVENLEDFAYSPAPRGVTVKCKVTRDKKGMDRGLFPTYYMHLEREENRKIFLLAGRKRKKSKTSNYLVSTDPTDLSREGESYIGKLRSNLMGTKFTVYDHGVNPVKAQGLVEKAHTRQELAAICYETNVLGFKGPRKMSVIIPGMNMNHERIPFRPRNEHESLLSKWQNKSMENLIELHNKAPVWNDDTQSYVLNFHGRVTQASVKNFQIVHGNDPDYIVMQFGRVADDVFTLDYNYPLCALQAFAIGLSSFDSKLACE.

2 disordered regions span residues 37–132 (KKQR…ETAP) and 151–193 (YDEE…GVTA). Residues 151–162 (YDEEPDKEEDEG) show a composition bias toward acidic residues. Low complexity predominate over residues 166-188 (SSPSARSEESAAASQKAASETGA).

This sequence belongs to the TUB family. In terms of assembly, associates with the IFT complex A (IFT-A). Interacts with SIRT1. In terms of tissue distribution, widely expressed including eyes and adipose depots.

Its subcellular location is the nucleus. It localises to the cell membrane. The protein resides in the cell projection. It is found in the cilium. The protein localises to the cytoplasm. Its subcellular location is the secreted. Its function is as follows. Negative regulator of the Shh signaling transduction pathway: recruited to primary cilia via association with the IFT complex A (IFT-A) and is required for recruitment of G protein-coupled receptor GPR161 to cilia, a promoter of PKA-dependent basal repression machinery in Shh signaling. Binds to phosphorylated inositide (phosphoinositide) lipids. Both IFT-A- and phosphoinositide-binding properties are required to regulate ciliary G protein-coupled receptor trafficking. During adipogenesis, regulates ciliary trafficking of FFAR4 in preadipocytes. The chain is Tubby-related protein 3 from Mus musculus (Mouse).